The sequence spans 293 residues: 4-hydroxy-tetrahydrodipicolinate synthase (293 aa).

A pyruvate-binding site is contributed by threonine 45. The active-site Proton donor/acceptor is tyrosine 133. Catalysis depends on lysine 161, which acts as the Schiff-base intermediate with substrate. Position 204 (isoleucine 204) interacts with pyruvate.

This sequence belongs to the DapA family. In terms of assembly, homotetramer; dimer of dimers.

It is found in the cytoplasm. It catalyses the reaction L-aspartate 4-semialdehyde + pyruvate = (2S,4S)-4-hydroxy-2,3,4,5-tetrahydrodipicolinate + H2O + H(+). The protein operates within amino-acid biosynthesis; L-lysine biosynthesis via DAP pathway; (S)-tetrahydrodipicolinate from L-aspartate: step 3/4. Catalyzes the condensation of (S)-aspartate-beta-semialdehyde [(S)-ASA] and pyruvate to 4-hydroxy-tetrahydrodipicolinate (HTPA). This chain is 4-hydroxy-tetrahydrodipicolinate synthase, found in Edwardsiella ictaluri (strain 93-146).